Here is a 113-residue protein sequence, read N- to C-terminus: Cytochrome c55X (113 aa).

The signal sequence occupies residues 1–26 (MTVARHAVSRLGLALASFLLFPLALA). Heme c is bound by residues Cys-45, Cys-48, and His-49.

Binds 1 heme c group covalently per subunit.

It localises to the periplasm. Monoheme c-type cytochrome. The chain is Cytochrome c55X (nirC) from Stutzerimonas stutzeri (Pseudomonas stutzeri).